Reading from the N-terminus, the 472-residue chain is Gamma-aminobutyric acid receptor subunit beta-2 (472 aa).

The first 23 residues, 1-23 (RVRKKDYFGIWSFPLIIAAVCAQ), serve as a signal peptide directing secretion. Residues 24–239 (SVNDPSNMSL…LSLSFKLKRN (216 aa)) are Extracellular-facing. Asparagine 30 and asparagine 102 each carry an N-linked (GlcNAc...) asparagine glycan. Residue tyrosine 119 participates in histamine binding. Cysteine 158 and cysteine 172 are joined by a disulfide. Histamine contacts are provided by residues 178–179 (SY) and threonine 224. 4-aminobutanoate-binding residues include tyrosine 179 and threonine 224. 3 helical membrane-spanning segments follow: residues 240 to 260 (IGYFILQTYMPSILITILSWV), 271 to 290 (ARVALGITTVLTMTTINTHL), and 309 to 329 (GCFVFVFMALLEYALVNYIFF). The etomidate binding; allosteric effector stretch occupies residues 287–308 (NTHLRETLPKIPYVKAIDMYLM). The Cytoplasmic segment spans residues 330–450 (GRGPQRQKKA…LTDVNAIDRW (121 aa)). Tyrosine 401 bears the Phosphotyrosine mark. A helical transmembrane segment spans residues 451–471 (SRIFFPVVFSFFNIVYWLYYV).

The protein belongs to the ligand-gated ion channel (TC 1.A.9) family. Gamma-aminobutyric acid receptor (TC 1.A.9.5) subfamily. GABRB2 sub-subfamily. Heteropentamer, formed by a combination of alpha (GABRA1-6), beta (GABRB1-3), gamma (GABRG1-3), delta (GABRD), epsilon (GABRE), rho (GABRR1-3), pi (GABRP) and theta (GABRQ) chains, each subunit exhibiting distinct physiological and pharmacological properties. Interacts with UBQLN1. May interact with KIF21B. Identified in a complex of 720 kDa composed of LHFPL4, NLGN2, GABRA1, GABRB2, GABRG2 and GABRB3. In terms of processing, glycosylated.

It is found in the postsynaptic cell membrane. The protein resides in the cell membrane. It localises to the cytoplasmic vesicle membrane. It catalyses the reaction chloride(in) = chloride(out). With respect to regulation, allosterically activated by benzodiazepines. Allosterically activated by the anesthetic etomidate. Inhibited by the antagonist bicuculline. Potentiated by histamine. Its function is as follows. Beta subunit of the heteropentameric ligand-gated chloride channel gated by gamma-aminobutyric acid (GABA), a major inhibitory neurotransmitter in the brain. GABA-gated chloride channels, also named GABA(A) receptors (GABAAR), consist of five subunits arranged around a central pore and contain GABA active binding site(s) located at the alpha and beta subunit interface(s). When activated by GABA, GABAARs selectively allow the flow of chloride anions across the cell membrane down their electrochemical gradient. Chloride influx into the postsynaptic neuron following GABAAR opening decreases the neuron ability to generate a new action potential, thereby reducing nerve transmission. GABAARs containing alpha-1 and beta-2 or -3 subunits exhibit synaptogenic activity; the gamma-2 subunit being necessary but not sufficient to induce rapid synaptic contacts formation. Extrasynaptic beta-2 receptors contribute to the tonic GABAergic inhibition. Beta-containing GABAARs can simultaneously bind GABA and histamine where histamine binds at the interface of two neighboring beta subunits, which may be involved in the regulation of sleep and wakefulness. The sequence is that of Gamma-aminobutyric acid receptor subunit beta-2 (GABRB2) from Bos taurus (Bovine).